The sequence spans 79 residues: Conotoxin VnMKLT1-01122 (79 aa).

The first 22 residues, 1–22, serve as a signal peptide directing secretion; that stretch reads MKLTCMKIVAVLFLTAWTFVTA. Residues 23 to 48 constitute a propeptide that is removed on maturation; it reads DDSRNGLEYLFPKAHYEMNPEASKLN. Pyrrolidone carboxylic acid is present on glutamine 51. Cystine bridges form between cysteine 53-cysteine 70, cysteine 60-cysteine 74, and cysteine 69-cysteine 78.

Belongs to the conotoxin O1 superfamily. In terms of tissue distribution, expressed by the venom duct.

The protein localises to the secreted. The polypeptide is Conotoxin VnMKLT1-01122 (Conus ventricosus (Mediterranean cone)).